Consider the following 860-residue polypeptide: Alanine--tRNA ligase (860 aa).

His563, His567, Cys665, and His669 together coordinate Zn(2+).

The protein belongs to the class-II aminoacyl-tRNA synthetase family. Requires Zn(2+) as cofactor.

Its subcellular location is the cytoplasm. The catalysed reaction is tRNA(Ala) + L-alanine + ATP = L-alanyl-tRNA(Ala) + AMP + diphosphate. In terms of biological role, catalyzes the attachment of alanine to tRNA(Ala) in a two-step reaction: alanine is first activated by ATP to form Ala-AMP and then transferred to the acceptor end of tRNA(Ala). Also edits incorrectly charged Ser-tRNA(Ala) and Gly-tRNA(Ala) via its editing domain. The polypeptide is Alanine--tRNA ligase (Vibrio cholerae serotype O1 (strain ATCC 39315 / El Tor Inaba N16961)).